We begin with the raw amino-acid sequence, 184 residues long: Ribosome-recycling factor (184 aa).

Belongs to the RRF family.

Its subcellular location is the cytoplasm. In terms of biological role, responsible for the release of ribosomes from messenger RNA at the termination of protein biosynthesis. May increase the efficiency of translation by recycling ribosomes from one round of translation to another. In Oleidesulfovibrio alaskensis (strain ATCC BAA-1058 / DSM 17464 / G20) (Desulfovibrio alaskensis), this protein is Ribosome-recycling factor.